The chain runs to 237 residues: Uracil-DNA glycosylase (237 aa).

Asp77 functions as the Proton acceptor in the catalytic mechanism.

This sequence belongs to the uracil-DNA glycosylase (UDG) superfamily. UNG family.

It localises to the cytoplasm. The enzyme catalyses Hydrolyzes single-stranded DNA or mismatched double-stranded DNA and polynucleotides, releasing free uracil.. Its function is as follows. Excises uracil residues from the DNA which can arise as a result of misincorporation of dUMP residues by DNA polymerase or due to deamination of cytosine. The protein is Uracil-DNA glycosylase of Acinetobacter baumannii (strain SDF).